The sequence spans 217 residues: UPF0502 protein PFLU_2135 (217 aa).

This sequence belongs to the UPF0502 family.

This Pseudomonas fluorescens (strain SBW25) protein is UPF0502 protein PFLU_2135.